Consider the following 247-residue polypeptide: Mannose-specific lectin CML-2 (247 aa).

Asp87 and Gly107 together coordinate a carbohydrate. Asn119 carries N-linked (GlcNAc...) asparagine glycosylation. Glu129 and Asp131 together coordinate Mn(2+). Ca(2+) contacts are provided by Asp131 and Phe133. A carbohydrate-binding residues include Ser138 and Asn139. The Ca(2+) site is built by Asn139 and Asp142. Mn(2+) is bound by residues Asp142 and His147. Residues Gly221, Glu222, and Gln223 each contribute to the a carbohydrate site.

This sequence belongs to the leguminous lectin family. In terms of assembly, homodimer; non-covalently linked. Glycosylated.

Functionally, mannose-specific lectin. Also binds alpha-methyl-D-mannoside, D-glucose, N-acetyl-D-glucosamine and sucrose but not D-galactose, D-arabinose, D-fructose, D-xylose, lactose or glycoproteins fetiun, PSM and ovalbumin. Shows agglutinating activity towards rabbit erythrocytes. This chain is Mannose-specific lectin CML-2, found in Centrolobium microchaete (Canarywood tree).